The primary structure comprises 385 residues: Lipoyl synthase, mitochondrial (385 aa).

Residues 18 to 40 (TKAKNRTFSSSTVESSTKQPPQF) are disordered. Positions 113, 118, 124, 144, 148, 151, and 360 each coordinate [4Fe-4S] cluster. The Radical SAM core domain maps to 129–349 (ETGTATATIM…KTLGMEMGFR (221 aa)).

It belongs to the radical SAM superfamily. Lipoyl synthase family. The cofactor is [4Fe-4S] cluster.

It localises to the mitochondrion. It carries out the reaction [[Fe-S] cluster scaffold protein carrying a second [4Fe-4S](2+) cluster] + N(6)-octanoyl-L-lysyl-[protein] + 2 oxidized [2Fe-2S]-[ferredoxin] + 2 S-adenosyl-L-methionine + 4 H(+) = [[Fe-S] cluster scaffold protein] + N(6)-[(R)-dihydrolipoyl]-L-lysyl-[protein] + 4 Fe(3+) + 2 hydrogen sulfide + 2 5'-deoxyadenosine + 2 L-methionine + 2 reduced [2Fe-2S]-[ferredoxin]. It participates in protein modification; protein lipoylation via endogenous pathway; protein N(6)-(lipoyl)lysine from octanoyl-[acyl-carrier-protein]: step 2/2. Its function is as follows. Catalyzes the radical-mediated insertion of two sulfur atoms into the C-6 and C-8 positions of the octanoyl moiety bound to the lipoyl domains of lipoate-dependent enzymes, thereby converting the octanoylated domains into lipoylated derivatives. This Populus trichocarpa (Western balsam poplar) protein is Lipoyl synthase, mitochondrial.